The following is an 893-amino-acid chain: 26S proteasome non-ATPase regulatory subunit 2 (893 aa).

Residues 1-59 (MPQKEVTIPVPAKGGSNKEEDKKDNKDTEEKNTTTNTTTKDNKKDKKKDKKEETLSPED) form a disordered region. Basic and acidic residues-rich tracts occupy residues 16–32 (SNKE…EEKN) and 40–59 (KDNK…SPED). 7 PC repeats span residues 412–445 (STVA…HCSN), 446–482 (GALM…GTRI), 483–517 (SAIF…KMEF), 522–555 (GLAL…ASES), 562–583 (LGLG…ETLK), 666–700 (AIPL…EVAQ), and 701–735 (GAIL…DVHL).

The protein belongs to the proteasome subunit S2 family.

Functionally, acts as a regulatory subunit of the 26 proteasome which is involved in the ATP-dependent degradation of ubiquitinated proteins. This is 26S proteasome non-ATPase regulatory subunit 2 (psmD2) from Dictyostelium discoideum (Social amoeba).